Here is a 349-residue protein sequence, read N- to C-terminus: Ribonucleoside-diphosphate reductase small chain (349 aa).

Fe cation-binding residues include Asp-99, Glu-130, and His-133. Residue Tyr-137 is part of the active site. 3 residues coordinate Fe cation: Glu-192, Glu-226, and His-229.

This sequence belongs to the ribonucleoside diphosphate reductase small chain family. In terms of assembly, heterodimer of a large and a small subunit. Requires Fe cation as cofactor.

The enzyme catalyses a 2'-deoxyribonucleoside 5'-diphosphate + [thioredoxin]-disulfide + H2O = a ribonucleoside 5'-diphosphate + [thioredoxin]-dithiol. Functionally, provides the precursors necessary for DNA synthesis. Catalyzes the biosynthesis of deoxyribonucleotides from the corresponding ribonucleotides. The polypeptide is Ribonucleoside-diphosphate reductase small chain (RNR2) (Plasmodium falciparum (isolate Dd2)).